A 99-amino-acid chain; its full sequence is Large ribosomal subunit protein uL23 (99 aa).

The protein belongs to the universal ribosomal protein uL23 family. As to quaternary structure, part of the 50S ribosomal subunit. Contacts protein L29, and trigger factor when it is bound to the ribosome.

Its function is as follows. One of the early assembly proteins it binds 23S rRNA. One of the proteins that surrounds the polypeptide exit tunnel on the outside of the ribosome. Forms the main docking site for trigger factor binding to the ribosome. The protein is Large ribosomal subunit protein uL23 of Alkalilimnicola ehrlichii (strain ATCC BAA-1101 / DSM 17681 / MLHE-1).